The following is an 877-amino-acid chain: Clumping factor B (877 aa).

The N-terminal stretch at methionine 1–alanine 44 is a signal peptide. Positions tyrosine 15 to serine 26 match the YSIRK-G/S signaling motif motif. Composition is skewed to polar residues over residues alanine 44–alanine 61 and methionine 68–serine 95. A disordered region spans residues alanine 44–threonine 192. The segment at serine 45 to asparagine 542 is ligand binding A region. Over residues threonine 96 to proline 119 the composition is skewed to low complexity. A compositionally biased stretch (polar residues) spans glutamine 120–serine 189. Residues aspartate 272–serine 276 carry the MIDAS-like motif motif. The tract at residues tyrosine 530–asparagine 849 is disordered. A compositionally biased stretch (pro residues) spans aspartate 545 to glutamate 555. The segment covering proline 556–aspartate 801 has biased composition (acidic residues). Residues arginine 805–proline 816 show a composition bias toward polar residues. Residues histidine 833–glutamate 846 show a composition bias toward basic and acidic residues. Residues leucine 838 to glycine 842 carry the LPXTG sorting signal motif. Threonine 841 is subject to Pentaglycyl murein peptidoglycan amidated threonine. A propeptide spans glycine 842 to alanine 877 (removed by sortase).

Belongs to the serine-aspartate repeat-containing protein (SDr) family. Post-translationally, proteolytically cleaved by aureolysin (aur). This cleavage leads to the inactivation of ClfB.

It localises to the secreted. The protein resides in the cell wall. Its function is as follows. Cell surface-associated protein implicated in virulence by promoting bacterial attachment to both alpha- and beta-chains of human fibrinogen and inducing the formation of bacterial clumps. Partly responsible for mediating bacterial attachment to the highly keratinized squamous epithelial cells from the nasal cavity via an interaction with cytokeratin K10 (K10). Also promotes bacterial attachment to cultured keratinocytes, possibly through an interaction with cytokeratin K10. Binds mouse cytokeratin K10. Activates human platelet aggregation. The chain is Clumping factor B (clfB) from Staphylococcus aureus (strain NCTC 8325 / PS 47).